The sequence spans 201 residues: 3-isopropylmalate dehydratase small subunit (201 aa).

It belongs to the LeuD family. LeuD type 1 subfamily. As to quaternary structure, heterodimer of LeuC and LeuD.

It carries out the reaction (2R,3S)-3-isopropylmalate = (2S)-2-isopropylmalate. It functions in the pathway amino-acid biosynthesis; L-leucine biosynthesis; L-leucine from 3-methyl-2-oxobutanoate: step 2/4. Its function is as follows. Catalyzes the isomerization between 2-isopropylmalate and 3-isopropylmalate, via the formation of 2-isopropylmaleate. The polypeptide is 3-isopropylmalate dehydratase small subunit (Escherichia coli O9:H4 (strain HS)).